We begin with the raw amino-acid sequence, 393 residues long: Formate-dependent phosphoribosylglycinamide formyltransferase (393 aa).

N(1)-(5-phospho-beta-D-ribosyl)glycinamide is bound by residues 22–23 and Glu82; that span reads EL. ATP-binding positions include Arg114, Lys155, 160–165, 195–198, and Glu203; these read SSGKGQ and EGFV. Positions 119–308 constitute an ATP-grasp domain; the sequence is RLAAEDLGIP…EFALHLRAIL (190 aa). Mg(2+) contacts are provided by Glu267 and Glu279. Residues Asp286, Lys356, and 363 to 364 contribute to the N(1)-(5-phospho-beta-D-ribosyl)glycinamide site; that span reads RR.

Belongs to the PurK/PurT family. Homodimer.

It carries out the reaction N(1)-(5-phospho-beta-D-ribosyl)glycinamide + formate + ATP = N(2)-formyl-N(1)-(5-phospho-beta-D-ribosyl)glycinamide + ADP + phosphate + H(+). It functions in the pathway purine metabolism; IMP biosynthesis via de novo pathway; N(2)-formyl-N(1)-(5-phospho-D-ribosyl)glycinamide from N(1)-(5-phospho-D-ribosyl)glycinamide (formate route): step 1/1. Its function is as follows. Involved in the de novo purine biosynthesis. Catalyzes the transfer of formate to 5-phospho-ribosyl-glycinamide (GAR), producing 5-phospho-ribosyl-N-formylglycinamide (FGAR). Formate is provided by PurU via hydrolysis of 10-formyl-tetrahydrofolate. This Hydrogenovibrio crunogenus (strain DSM 25203 / XCL-2) (Thiomicrospira crunogena) protein is Formate-dependent phosphoribosylglycinamide formyltransferase.